We begin with the raw amino-acid sequence, 142 residues long: DNA-directed RNA polymerase subunit omega (142 aa).

Positions 104 to 142 (FNTDADVDQESTDIQDDEVENEMSNQDSEDIDDEVDNEE) are disordered. The segment covering 108 to 142 (ADVDQESTDIQDDEVENEMSNQDSEDIDDEVDNEE) has biased composition (acidic residues).

Belongs to the RNA polymerase subunit omega family. In terms of assembly, the RNAP catalytic core consists of 2 alpha, 1 beta, 1 beta' and 1 omega subunit. When a sigma factor is associated with the core the holoenzyme is formed, which can initiate transcription.

It catalyses the reaction RNA(n) + a ribonucleoside 5'-triphosphate = RNA(n+1) + diphosphate. In terms of biological role, promotes RNA polymerase assembly. Latches the N- and C-terminal regions of the beta' subunit thereby facilitating its interaction with the beta and alpha subunits. In Wolbachia sp. subsp. Brugia malayi (strain TRS), this protein is DNA-directed RNA polymerase subunit omega.